We begin with the raw amino-acid sequence, 306 residues long: Tricarboxylate transporter FUM11 (306 aa).

Solcar repeat units lie at residues 18–98, 109–195, and 206–292; these read SDTL…YQKL, FGIL…LKQV, and IGTV…VVEG. 6 helical membrane passes run 24–44, 67–87, 113–133, 170–189, 209–229, and 267–286; these read LVAG…AEFA, GLQW…KTSI, LAGF…SERI, GFWP…LGSY, VKTF…TQPL, and GAVA…FMVY.

It belongs to the mitochondrial carrier (TC 2.A.29) family.

It localises to the mitochondrion inner membrane. The protein operates within mycotoxin biosynthesis. Tricarboxylate transporter; part of the gene cluster that mediates the biosynthesis of fumonisins B1 (FB1), B2 (FB2), B3 (FB3), and B4 (FB4), which are carcinogenic mycotoxins. Within the pathway, FUM11 is involved the addition of the tricarballylic moieties to the carbon backbone. FUM11 makes a tricarboxylic acid precursor available for fumonisin biosynthesis via its export from the mitochondria. The biosynthesis starts with the FUM1-catalyzed carbon chain assembly from one molecule of acetyl-CoA, eight molecules of malonyl-CoA, and two molecules of methionine (in S-adenosyl form). The C18 polyketide chain is released from the enzyme by a nucleophilic attack of a carbanion, which is derived from R-carbon of alanine by decarboxylation, on the carbonyl carbon of polyketide acyl chain. This step is catalyzed by the pyridoxal 5'-phosphate-dependent aminoacyl transferase FUM8. The resultant 3-keto intermediate is then stereospecifically reduced to a 3-hydroxyl product by reductase FUM13. Subsequent oxidations at C-10 by the cytochrome P450 monooxygenase FUM2, C-14 and C-15 by FUM6, FUM12 or FUM15, tricarballylic esterification of the hydroxyl groups on C-14 and C-15 by acyltransferase FUM14, and C-5 hydroxylation by 2-keto-glutarate-dependent dioxygenase FUM3 furnish the biosynthesis of fumonisins. The tricarballylic moieties are most likely derived from the citric acid cycle, and their addition to the carbon backbone may involve FUM7, FUM10, FUM11 and FUM14. In Gibberella moniliformis (strain M3125 / FGSC 7600) (Maize ear and stalk rot fungus), this protein is Tricarboxylate transporter FUM11.